Reading from the N-terminus, the 98-residue chain is DNA-binding protein Fis (98 aa).

A DNA-binding region (H-T-H motif) is located at residues 74–93; it reads QTRAALMLGINRSTLRKKLK.

Belongs to the transcriptional regulatory Fis family. In terms of assembly, homodimer.

Activates ribosomal RNA transcription. Plays a direct role in upstream activation of rRNA promoters. This Buchnera aphidicola subsp. Acyrthosiphon pisum (strain 5A) protein is DNA-binding protein Fis.